We begin with the raw amino-acid sequence, 632 residues long: MSASTSTSTAASQDACYISLLGLAEYFRTSQPPNIKKCIQCLQALFTFMPPSKVEARTHLQMGQILMAYTKNIDLARQHLEKAWSISEPLPNFDVKFDTASLLAQLHLQTDRNSHQAKAMLRRAVELSQNNVYWHCKLLLQLSQIHASDREYSLASELLAVGAESADEASATYLKVLFLLSRAMILMIERKTNDVLALLNSAGQIIDNNIPNPHQKEYLKVFFLVLQVCYYLALGQVKTVKPSLKQLQMSIQTIMAPNWPSDEAIFGANQLEMFVWLPKEQLYVLVYLVTVSHSMMAGYMDKAQKYTEKALTQIEKLKQQEDKPILSVFKVILLEHIVMCRMVMGNRELAIREIAAARDVCMAAPQRSLLRRHSAQLHCLIGLYSMSTNLFEHAERQFVVCVSETSERDLKLFANLNLAIIYLRTKRDTDLKQILDAVSTENTHTYSSQALMGGFYYVQGLHAFHKNSFHEAKRFLRETLKMANAEDLNRLTSCSLVLLSHVFLSIGNSKESMNMVTPAMQLASKIPDIHVQLWGSAILKDLHRMSKDVQHEKDAYANHVKYSENLIADQRKCVQSAHHELVNWFQGDPPVTSGPPAVPVLLMPESSVTASVPVIASTSAAMQPAGQYGQFY.

TPR repeat units lie at residues Gly453–Glu486 and Ser493–Ile526.

It belongs to the SCC4/mau-2 family. As to quaternary structure, interacts with Nipped-B to form the cohesin loading complex.

Its subcellular location is the nucleus. The protein resides in the nucleoplasm. In terms of biological role, required for association of the cohesin complex with chromatin during interphase. Plays a role in sister chromatid cohesion and normal progression through prometaphase. This is MAU2 chromatid cohesion factor homolog from Drosophila sechellia (Fruit fly).